Reading from the N-terminus, the 348-residue chain is Uroporphyrinogen decarboxylase (348 aa).

Residues arginine 27–arginine 31, phenylalanine 46, aspartate 76, tyrosine 152, serine 207, and histidine 320 each bind substrate.

Belongs to the uroporphyrinogen decarboxylase family. Homodimer.

It is found in the cytoplasm. The catalysed reaction is uroporphyrinogen III + 4 H(+) = coproporphyrinogen III + 4 CO2. It participates in porphyrin-containing compound metabolism; protoporphyrin-IX biosynthesis; coproporphyrinogen-III from 5-aminolevulinate: step 4/4. Functionally, catalyzes the decarboxylation of four acetate groups of uroporphyrinogen-III to yield coproporphyrinogen-III. The protein is Uroporphyrinogen decarboxylase of Bacillus cytotoxicus (strain DSM 22905 / CIP 110041 / 391-98 / NVH 391-98).